A 142-amino-acid polypeptide reads, in one-letter code: Lysosomal enzyme trafficking factor (142 aa).

The next 2 helical transmembrane spans lie at 8–28 (MGWIGVGLYLLASVAAVYYIF) and 76–96 (LLPFWVWATIFLLPYLQVFLF).

The protein belongs to the LYSET family.

The protein resides in the golgi apparatus membrane. Required for mannose-6-phosphate-dependent trafficking of lysosomal enzymes. LYSET bridges GlcNAc-1-phosphate transferase (GNPTAB), to the membrane-bound transcription factor site-1 protease (MBTPS1), thus allowing proteolytic activation of the GNPTAB. GNPTAB is involved in the regulation of M6P-dependent Golgi-to-lysosome trafficking of lysosomal enzymes. LYSET is thus an essential factor for maturation and delivery of lysosomal hydrolases. The protein is Lysosomal enzyme trafficking factor (tmem251) of Danio rerio (Zebrafish).